A 215-amino-acid polypeptide reads, in one-letter code: Orotate phosphoribosyltransferase (215 aa).

Lys-26 is a 5-phospho-alpha-D-ribose 1-diphosphate binding site. Residue 34–35 (FF) coordinates orotate. 5-phospho-alpha-D-ribose 1-diphosphate is bound by residues 72–73 (YK), Arg-99, Lys-100, Lys-103, His-105, and 124–132 (DDVITAGTA). Orotate contacts are provided by Thr-128 and Arg-156.

It belongs to the purine/pyrimidine phosphoribosyltransferase family. PyrE subfamily. As to quaternary structure, homodimer. The cofactor is Mg(2+).

The enzyme catalyses orotidine 5'-phosphate + diphosphate = orotate + 5-phospho-alpha-D-ribose 1-diphosphate. It participates in pyrimidine metabolism; UMP biosynthesis via de novo pathway; UMP from orotate: step 1/2. Catalyzes the transfer of a ribosyl phosphate group from 5-phosphoribose 1-diphosphate to orotate, leading to the formation of orotidine monophosphate (OMP). In Stutzerimonas stutzeri (strain A1501) (Pseudomonas stutzeri), this protein is Orotate phosphoribosyltransferase.